Consider the following 98-residue polypeptide: Citrate lyase acyl carrier protein (98 aa).

At Ser-14 the chain carries O-(phosphoribosyl dephospho-coenzyme A)serine.

Belongs to the CitD family. Oligomer with a subunit composition of (alpha,beta,gamma)6.

It is found in the cytoplasm. Functionally, covalent carrier of the coenzyme of citrate lyase. This is Citrate lyase acyl carrier protein from Vibrio cholerae serotype O1 (strain ATCC 39315 / El Tor Inaba N16961).